The primary structure comprises 275 residues: Anamorsin homolog (275 aa).

Positions 1–147 (MTSASIHIGS…QSASSAAATG (147 aa)) are N-terminal SAM-like domain. Residues 148–183 (RINLGGAKTKVKLSLDDDDDDQLIDEDDLLNGGGGM) are linker. Cys203, Cys209, Cys212, and Cys214 together coordinate [2Fe-2S] cluster. Residues 203–214 (CGGRKACDNCTC) are fe-S binding site A. Positions 238, 241, 249, and 252 each coordinate [4Fe-4S] cluster. Short sequence motifs (cx2C motif) lie at residues 238–241 (CGNC) and 249–252 (CAGC). A fe-S binding site B region spans residues 238–252 (CGNCAKGDAFRCAGC).

The protein belongs to the anamorsin family. As to quaternary structure, monomer. [2Fe-2S] cluster is required as a cofactor. It depends on [4Fe-4S] cluster as a cofactor.

It localises to the cytoplasm. The protein localises to the mitochondrion intermembrane space. Functionally, component of the cytosolic iron-sulfur (Fe-S) protein assembly (CIA) machinery. Required for the maturation of extramitochondrial Fe-S proteins. Part of an electron transfer chain functioning in an early step of cytosolic Fe-S biogenesis, facilitating the de novo assembly of a [4Fe-4S] cluster on the cytosolic Fe-S scaffold complex. Electrons are transferred from NADPH via a FAD- and FMN-containing diflavin oxidoreductase. Together with the diflavin oxidoreductase, also required for the assembly of the diferric tyrosyl radical cofactor of ribonucleotide reductase (RNR), probably by providing electrons for reduction during radical cofactor maturation in the catalytic small subunit. The polypeptide is Anamorsin homolog (Thalassiosira pseudonana (Marine diatom)).